A 428-amino-acid polypeptide reads, in one-letter code: Glutamate-1-semialdehyde 2,1-aminomutase (428 aa).

K265 is subject to N6-(pyridoxal phosphate)lysine.

It belongs to the class-III pyridoxal-phosphate-dependent aminotransferase family. HemL subfamily. As to quaternary structure, homodimer. It depends on pyridoxal 5'-phosphate as a cofactor.

Its subcellular location is the cytoplasm. It carries out the reaction (S)-4-amino-5-oxopentanoate = 5-aminolevulinate. The protein operates within porphyrin-containing compound metabolism; protoporphyrin-IX biosynthesis; 5-aminolevulinate from L-glutamyl-tRNA(Glu): step 2/2. This chain is Glutamate-1-semialdehyde 2,1-aminomutase, found in Methylobacillus flagellatus (strain ATCC 51484 / DSM 6875 / VKM B-1610 / KT).